The sequence spans 255 residues: Ribonuclease PH (255 aa).

Phosphate is bound by residues R86 and 124–126 (GTR).

Belongs to the RNase PH family. Homohexameric ring arranged as a trimer of dimers.

It carries out the reaction tRNA(n+1) + phosphate = tRNA(n) + a ribonucleoside 5'-diphosphate. In terms of biological role, phosphorolytic 3'-5' exoribonuclease that plays an important role in tRNA 3'-end maturation. Removes nucleotide residues following the 3'-CCA terminus of tRNAs; can also add nucleotides to the ends of RNA molecules by using nucleoside diphosphates as substrates, but this may not be physiologically important. Probably plays a role in initiation of 16S rRNA degradation (leading to ribosome degradation) during starvation. The sequence is that of Ribonuclease PH from Geobacillus sp. (strain WCH70).